Reading from the N-terminus, the 442-residue chain is Protein cereblon (442 aa).

The interval 1–45 is disordered; it reads MAGEGDQQDAAHNMGNHLPLLPAESEEEDEMEVEDQDSKEAKKPN. Residues 24-35 show a composition bias toward acidic residues; that stretch reads ESEEEDEMEVED. S25 bears the Phosphoserine mark. The 239-residue stretch at 81–319 folds into the Lon N-terminal domain; that stretch reads IPVLPQVMMI…CELDIMNKCT (239 aa). The CULT domain maps to 318-426; the sequence is CTSLCCKQCQ…LTRSALLPTI (109 aa). Zn(2+) contacts are provided by C323 and C326. 3 residues coordinate (S)-thalidomide: H378, W380, and W386. 2 residues coordinate Zn(2+): C391 and C394.

It belongs to the CRBN family. As to quaternary structure, interacts with KCNT1. Component of a DCX (DDB1-CUL4-X-box) protein ligase complex, at least composed of CRBN, CUL4A, DDB1 and RBX1. Interacts directly with DDB1. Interacts (in pomalidomide-bound form) with IKZF1 and IKZF3. Interacts with ILF2. Interacts with TRAF6 and ECSIT. Ubiquitinated, ubiquitination is mediated by its own DCX protein ligase complex. As to expression, widely expressed. Highly expressed in brain.

The protein localises to the cytoplasm. Its subcellular location is the nucleus. The protein resides in the membrane. It functions in the pathway protein modification; protein ubiquitination. Functionally, substrate recognition component of a DCX (DDB1-CUL4-X-box) E3 protein ligase complex that mediates the ubiquitination and subsequent proteasomal degradation of target proteins, such as MEIS2, ILF2 or GLUL. Normal degradation of key regulatory proteins is required for normal limb outgrowth and expression of the fibroblast growth factor FGF8. Maintains presynaptic glutamate release and consequently cognitive functions, such as memory and learning, by negatively regulating large-conductance calcium-activated potassium (BK) channels in excitatory neurons. Likely to function by regulating the assembly and neuronal surface expression of BK channels via its interaction with KCNT1. May also be involved in regulating anxiety-like behaviors via a BK channel-independent mechanism. Plays a negative role in TLR4 signaling by interacting with TRAF6 and ECSIT, leading to inhibition of ECSIT ubiquitination, an important step of the signaling. This Homo sapiens (Human) protein is Protein cereblon (CRBN).